A 197-amino-acid chain; its full sequence is Cell division protein SepF (197 aa).

Disordered regions lie at residues 38 to 72 and 164 to 197; these read MPTP…TTPT and LSRE…AQAQ. The segment covering 58-72 has biased composition (polar residues); it reads TVASNFAMNSNTTPT. Positions 170 to 185 are enriched in low complexity; the sequence is PATPAAPARPAAPAPA.

Belongs to the SepF family. Homodimer. Interacts with FtsZ.

It is found in the cytoplasm. Cell division protein that is part of the divisome complex and is recruited early to the Z-ring. Probably stimulates Z-ring formation, perhaps through the cross-linking of FtsZ protofilaments. Its function overlaps with FtsA. In Picosynechococcus sp. (strain ATCC 27264 / PCC 7002 / PR-6) (Agmenellum quadruplicatum), this protein is Cell division protein SepF.